A 542-amino-acid polypeptide reads, in one-letter code: Organic anion transporter 3 (542 aa).

Topologically, residues M1 to R9 are cytoplasmic. The residue at position 4 (S4) is a Phosphoserine. A helical membrane pass occupies residues V10–G30. The Extracellular portion of the chain corresponds to M31–E123. N-linked (GlcNAc...) asparagine glycosylation is present at N86. A helical membrane pass occupies residues M124 to S144. Residues D145–K150 lie on the Cytoplasmic side of the membrane. The chain crosses the membrane as a helical span at residues P151–P171. At T172 to Y176 the chain is on the extracellular side. Residues M177–L197 traverse the membrane as a helical segment. Residues N198–T212 lie on the Cytoplasmic side of the membrane. A helical membrane pass occupies residues A213 to P233. Residues Q234–R236 lie on the Extracellular side of the membrane. A helical membrane pass occupies residues W237–P257. The Cytoplasmic segment spans residues E258–T327. Residues L328–V348 form a helical membrane-spanning segment. Residues E349–N354 lie on the Extracellular side of the membrane. The chain crosses the membrane as a helical span at residues I355 to L375. The Cytoplasmic portion of the chain corresponds to S376–A389. Residues L390–L410 form a helical membrane-spanning segment. Residue R411 is a topological domain, extracellular. The helical transmembrane segment at T412–Y432 threads the bilayer. Residues T433–P471 are Cytoplasmic-facing. The chain crosses the membrane as a helical span at residues F472–L492. The Extracellular portion of the chain corresponds to P493–S542. Positions K518 to S527 are enriched in basic and acidic residues. The tract at residues K518–S542 is disordered.

It belongs to the major facilitator (TC 2.A.1) superfamily. Organic cation transporter (TC 2.A.1.19) family.

The protein localises to the basolateral cell membrane. It catalyses the reaction estrone 3-sulfate(out) + glutarate(in) = estrone 3-sulfate(in) + glutarate(out). The enzyme catalyses estrone 3-sulfate(in) + 2-oxoglutarate(out) = estrone 3-sulfate(out) + 2-oxoglutarate(in). The catalysed reaction is glutarate(in) + 2-oxoglutarate(out) = glutarate(out) + 2-oxoglutarate(in). It carries out the reaction urate(in) + 2-oxoglutarate(out) = urate(out) + 2-oxoglutarate(in). It catalyses the reaction taurocholate(out) + glutarate(in) = taurocholate(in) + glutarate(out). The enzyme catalyses dehydroepiandrosterone 3-sulfate(out) + glutarate(in) = dehydroepiandrosterone 3-sulfate(in) + glutarate(out). The catalysed reaction is prostaglandin F2alpha(out) + glutarate(in) = prostaglandin F2alpha(in) + glutarate(out). It carries out the reaction prostaglandin F2alpha(out) + 2-oxoglutarate(in) = prostaglandin F2alpha(in) + 2-oxoglutarate(out). It catalyses the reaction (R)-carnitine(out) + 2-oxoglutarate(in) = (R)-carnitine(in) + 2-oxoglutarate(out). The enzyme catalyses glutarate(in) + (R)-carnitine(out) = glutarate(out) + (R)-carnitine(in). The catalysed reaction is prostaglandin E2(out) + 2-oxoglutarate(in) = prostaglandin E2(in) + 2-oxoglutarate(out). It carries out the reaction prostaglandin E2(out) + glutarate(in) = prostaglandin E2(in) + glutarate(out). It catalyses the reaction urate(in) + glutarate(out) = urate(out) + glutarate(in). The enzyme catalyses taurocholate(out) + 2-oxoglutarate(in) = taurocholate(in) + 2-oxoglutarate(out). The catalysed reaction is dehydroepiandrosterone 3-sulfate(out) + 2-oxoglutarate(in) = dehydroepiandrosterone 3-sulfate(in) + 2-oxoglutarate(out). It carries out the reaction kynurenate(out) + a dicarboxylate(in) = kynurenate(in) + a dicarboxylate(out). It catalyses the reaction (indol-3-yl)acetate(out) + a dicarboxylate(in) = (indol-3-yl)acetate(in) + a dicarboxylate(out). The enzyme catalyses indoxyl sulfate(out) + a dicarboxylate(in) = indoxyl sulfate(in) + a dicarboxylate(out). The catalysed reaction is N-benzoylglycine(out) + a dicarboxylate(in) = N-benzoylglycine(in) + a dicarboxylate(out). It carries out the reaction 3-carboxy-4-methyl-5-propyl-2-furanpropanoate(out) + a dicarboxylate(in) = 3-carboxy-4-methyl-5-propyl-2-furanpropanoate(in) + a dicarboxylate(out). It catalyses the reaction (6R)-L-erythro-5,6,7,8-tetrahydrobiopterin(out) + a dicarboxylate(in) = (6R)-L-erythro-5,6,7,8-tetrahydrobiopterin(in) + a dicarboxylate(out). The enzyme catalyses L-erythro-7,8-dihydrobiopterin(out) + a dicarboxylate(in) = L-erythro-7,8-dihydrobiopterin(in) + a dicarboxylate(out). The catalysed reaction is L-sepiapterin(out) + a dicarboxylate(in) = L-sepiapterin(in) + a dicarboxylate(out). Functions as an organic anion/dicarboxylate exchanger that couples organic anion uptake indirectly to the sodium gradient. Transports organic anions such as estrone 3-sulfate (E1S) and urate in exchange for dicarboxylates such as glutarate or ketoglutarate (2-oxoglutarate). Plays an important role in the excretion of endogenous and exogenous organic anions, especially from the kidney and the brain. E1S transport is pH- and chloride-dependent and may also involve E1S/cGMP exchange. Responsible for the transport of prostaglandin E2 (PGE2) and prostaglandin F2(alpha) (PGF2(alpha)) in the basolateral side of the renal tubule. Involved in the transport of neuroactive tryptophan metabolites kynurenate and xanthurenate. Functions as a biopterin transporters involved in the uptake and the secretion of coenzymes tetrahydrobiopterin (BH4), dihydrobiopterin (BH2) and sepiapterin to urine, thereby determining baseline levels of blood biopterins. May be involved in the basolateral transport of steviol, a metabolite of the popular sugar substitute stevioside. May participate in the detoxification/ renal excretion of drugs and xenobiotics, such as the histamine H(2)-receptor antagonists fexofenadine and cimetidine, the antibiotic benzylpenicillin (PCG), the anionic herbicide 2,4-dichloro-phenoxyacetate (2,4-D), the diagnostic agent p-aminohippurate (PAH), the antiviral acyclovir (ACV), and the mycotoxin ochratoxin (OTA), by transporting these exogenous organic anions across the cell membrane in exchange for dicarboxylates such as 2-oxoglutarate. Contributes to the renal uptake of potent uremic toxins (indoxyl sulfate (IS), indole acetate (IA), hippurate/N-benzoylglycine (HA) and 3-carboxy-4-methyl-5-propyl-2-furanpropionate (CMPF)), pravastatin, PCG, E1S and dehydroepiandrosterone sulfate (DHEAS), and is partly involved in the renal uptake of temocaprilat (an angiotensin-converting enzyme (ACE) inhibitor). May contribute to the release of cortisol in the adrenals. Involved in one of the detoxification systems on the choroid plexus (CP), removes substrates such as E1S or taurocholate (TC), PCG, 2,4-D and PAH, from the cerebrospinal fluid (CSF) to the blood for eventual excretion in urine and bile. Also contributes to the uptake of several other organic compounds such as the prostanoids prostaglandin E(2) and prostaglandin F(2-alpha), L-carnitine, and the therapeutic drugs allopurinol, 6-mercaptopurine (6-MP) and 5-fluorouracil (5-FU). Mediates the transport of PAH, PCG, and the statins pravastatin and pitavastatin, from the cerebrum into the blood circulation across the blood-brain barrier (BBB). In summary, plays a role in the efflux of drugs and xenobiotics, helping reduce their undesired toxicological effects on the body. This chain is Organic anion transporter 3 (SLC22A8), found in Oryctolagus cuniculus (Rabbit).